The following is a 1109-amino-acid chain: Protein phosphatase 1 regulatory subunit 3A (1109 aa).

Phosphoserine; by GSK3 is present on residues S40 and S44. Position 48 is a phosphoserine; by PKA and ISPK (S48). The residue at position 51 (S51) is a Phosphoserine. T58 is subject to Phosphothreonine. A PP1-binding motif motif is present at residues 64–67 (RRVS). Residue S67 is modified to Phosphoserine; by PKA. Residues 124–232 (QLQVQKAMLE…NNNGTNYTLV (109 aa)) enclose the CBM21 domain. A compositionally biased stretch (basic and acidic residues) spans 236–251 (KEPEPEPGKPLEEAPS). Disordered regions lie at residues 236–278 (KEPE…NFEN), 340–424 (GKNT…SDGS), 436–455 (DDNA…CSFP), and 493–517 (YFKK…KEKR). 3 stretches are compositionally biased toward polar residues: residues 340-352 (GKNT…SNIP), 360-384 (KNQS…SAES), and 396-406 (YSSGNESSHQP). Position 843 is a phosphoserine (S843). Disordered regions lie at residues 945 to 985 (SATE…RKEK) and 1011 to 1048 (SREN…ETQD). A compositionally biased stretch (polar residues) spans 951–963 (YNCSPTRETQGQP). Composition is skewed to basic and acidic residues over residues 966-985 (KPEE…RKEK) and 1011-1034 (SREN…KEFE). The segment covering 1035–1048 (SSASSSLPVQETQD) has biased composition (polar residues). A helical transmembrane segment spans residues 1066–1086 (FLLFLMFLVTVYHYDLMIGLA).

As to quaternary structure, interacts with PPP1CC catalytic subunit of PP1, and associates with glycogen. Phosphorylation at Ser-48 by ISPK stimulates the dephosphorylation of glycogen synthase and phosphorylase kinase. In terms of tissue distribution, skeletal muscle, diaphragm and cardiac muscle.

It is found in the membrane. Its function is as follows. Seems to act as a glycogen-targeting subunit for PP1. PP1 is essential for cell division, and participates in the regulation of glycogen metabolism, muscle contractility and protein synthesis. Plays an important role in glycogen synthesis but is not essential for insulin activation of glycogen synthase. In Oryctolagus cuniculus (Rabbit), this protein is Protein phosphatase 1 regulatory subunit 3A (PPP1R3A).